Consider the following 418-residue polypeptide: Serine hydroxymethyltransferase (418 aa).

(6S)-5,6,7,8-tetrahydrofolate contacts are provided by residues Leu-121 and 125-127; that span reads GHL. Residue Lys-230 is modified to N6-(pyridoxal phosphate)lysine. Residue 356–358 participates in (6S)-5,6,7,8-tetrahydrofolate binding; sequence SPF.

This sequence belongs to the SHMT family. Homodimer. The cofactor is pyridoxal 5'-phosphate.

It localises to the cytoplasm. It carries out the reaction (6R)-5,10-methylene-5,6,7,8-tetrahydrofolate + glycine + H2O = (6S)-5,6,7,8-tetrahydrofolate + L-serine. It participates in one-carbon metabolism; tetrahydrofolate interconversion. The protein operates within amino-acid biosynthesis; glycine biosynthesis; glycine from L-serine: step 1/1. Its function is as follows. Catalyzes the reversible interconversion of serine and glycine with tetrahydrofolate (THF) serving as the one-carbon carrier. This reaction serves as the major source of one-carbon groups required for the biosynthesis of purines, thymidylate, methionine, and other important biomolecules. Also exhibits THF-independent aldolase activity toward beta-hydroxyamino acids, producing glycine and aldehydes, via a retro-aldol mechanism. The protein is Serine hydroxymethyltransferase of Shewanella halifaxensis (strain HAW-EB4).